The following is a 356-amino-acid chain: Tyrosine recombinase XerS (356 aa).

The region spanning 16–121 is the Core-binding (CB) domain; it reads IMPWYVLDYY…ALSSLYKYLT (106 aa). The region spanning 169-354 is the Tyr recombinase domain; that stretch reads AFLDYVDKEY…VNDEQKNALD (186 aa). Residues R210, K234, H306, R309, and H332 contribute to the active site. The active-site O-(3'-phospho-DNA)-tyrosine intermediate is Y341.

Belongs to the 'phage' integrase family. XerS subfamily.

It is found in the cytoplasm. With respect to regulation, ftsK is required for recombination. In terms of biological role, site-specific tyrosine recombinase, which acts by catalyzing the cutting and rejoining of the recombining DNA molecules. Essential to convert dimers of the bacterial chromosome into monomers to permit their segregation at cell division. The polypeptide is Tyrosine recombinase XerS (Streptococcus equi subsp. zooepidemicus (strain MGCS10565)).